We begin with the raw amino-acid sequence, 134 residues long: Small ribosomal subunit protein uS9 (134 aa).

The tract at residues 114-134 (EVERKKYGLKKARRAPQFSKR) is disordered. The span at 120-134 (YGLKKARRAPQFSKR) shows a compositional bias: basic residues.

It belongs to the universal ribosomal protein uS9 family.

This is Small ribosomal subunit protein uS9 from Thermotoga sp. (strain RQ2).